The sequence spans 526 residues: Probable feruloyl esterase B (526 aa).

An N-terminal signal peptide occupies residues 1 to 18 (MARLSLLTLLALGSAALA). 2 disulfide bridges follow: C27–C74 and C62–C113. N137 carries N-linked (GlcNAc...) asparagine glycosylation. 4 disulfide bridges follow: C186–C441, C255–C272, C281–C291, and C503–C525. Residue S187 is the Acyl-ester intermediate of the active site. N233 is a glycosylation site (N-linked (GlcNAc...) asparagine). Residues D256, D259, A261, D263, and I265 each coordinate Ca(2+). The N-linked (GlcNAc...) asparagine glycan is linked to N311. Active-site charge relay system residues include D400 and H440. N516 carries N-linked (GlcNAc...) asparagine glycosylation.

The protein belongs to the tannase family.

The protein resides in the secreted. It carries out the reaction feruloyl-polysaccharide + H2O = ferulate + polysaccharide.. Involved in degradation of plant cell walls. Hydrolyzes the feruloyl-arabinose ester bond in arabinoxylans as well as the feruloyl-galactose and feruloyl-arabinose ester bonds in pectin. The protein is Probable feruloyl esterase B (faeB) of Aspergillus clavatus (strain ATCC 1007 / CBS 513.65 / DSM 816 / NCTC 3887 / NRRL 1 / QM 1276 / 107).